The primary structure comprises 305 residues: UDP-3-O-acyl-N-acetylglucosamine deacetylase (305 aa).

Residues H79, H238, and D242 each contribute to the Zn(2+) site. H265 serves as the catalytic Proton donor.

The protein belongs to the LpxC family. Requires Zn(2+) as cofactor.

It catalyses the reaction a UDP-3-O-[(3R)-3-hydroxyacyl]-N-acetyl-alpha-D-glucosamine + H2O = a UDP-3-O-[(3R)-3-hydroxyacyl]-alpha-D-glucosamine + acetate. The protein operates within glycolipid biosynthesis; lipid IV(A) biosynthesis; lipid IV(A) from (3R)-3-hydroxytetradecanoyl-[acyl-carrier-protein] and UDP-N-acetyl-alpha-D-glucosamine: step 2/6. Functionally, catalyzes the hydrolysis of UDP-3-O-myristoyl-N-acetylglucosamine to form UDP-3-O-myristoylglucosamine and acetate, the committed step in lipid A biosynthesis. The sequence is that of UDP-3-O-acyl-N-acetylglucosamine deacetylase from Colwellia psychrerythraea (strain 34H / ATCC BAA-681) (Vibrio psychroerythus).